The chain runs to 107 residues: Putidaredoxin (107 aa).

One can recognise a 2Fe-2S ferredoxin-type domain in the interval 2–106 (SKVVYVSHDG…GIVVDVPDRQ (105 aa)). [2Fe-2S] cluster-binding residues include cysteine 40, cysteine 46, cysteine 49, and cysteine 87.

It belongs to the adrenodoxin/putidaredoxin family. In terms of assembly, monomer. Requires [2Fe-2S] cluster as cofactor.

Its function is as follows. The oxidation of camphor by cytochrome P450-CAM requires the participation of a flavoprotein, putidaredoxin reductase, and an iron-sulfur protein, putidaredoxin, to mediate the transfer of electrons from NADH to P450 for oxygen activation. The sequence is that of Putidaredoxin (camB) from Pseudomonas putida (Arthrobacter siderocapsulatus).